We begin with the raw amino-acid sequence, 804 residues long: MHNFSKLAVAFVAAASFASAEPETKAKVERPIIYFPRHIKRQFANTTTPASEASSSTSRPPPIPVPETSSFSSSASSSSAQELTASRQPTSIDEFFSTLSDALTTDSTPFSQRPATSGAGRSSATGDVTPIIVPSSASPPSTAVKPGSVSALTTSQNSTSAATSESVTSPGSTSGPAGTPESSSASDFTSAVATSRASTATSNTGLIPETTILPTTATSNTGLIPETTILPTTASLSTAESAVTPSITSSASSSGILIAPTGVVTPTSSSSTEDPVFDGIGTLISSIVSSVSTVLQPNGTAPVTTTPNTSVDVATTPVDIASTTASDTLSPTTAVVSTTGPVTSVQTLPPVSTPTANGTVTSPPVDSQTTVLPTTTPGLSSDTIVTSPGVTANSTQVPTTVPTTIPTTQPPVTEPTITPTVLPPSPNNTVPSNTTTQLPPTQAPTLTQLPTTTTSPALTTPATTPSVAPTSATSSANSNDDWLPTTIIVQAPLPSTTGSSTNAPSSAPTVLPSDLPKIINPSDDITEPLGPDMMEIQVAFKFALNYRFITNENPNAGAQIFEYLPKSLKYMEGLTEEQKKRLQVLRVVPLNTEQQLGYVTSVAIATWPKAFFPQLRLDVKTPFSQFYQNTSNGMLAHNLTMLVNPAIDILPGATLDGKPAGAGSGTGGNGSNGPNDVFNNDNNSTNQSATQRGTVAGIAFGAVSLAAAYGAAMFIVARRYKKKRQAHRRSSSVATPSEMRQSGSPALMGGALLSRDFTHYGGVMGPAGGRESHGSNGSGRSAGNSARTAGISAPVAQENSLGWN.

A signal peptide spans 1–20 (MHNFSKLAVAFVAAASFASA). The Extracellular portion of the chain corresponds to 21-694 (EPETKAKVER…TNQSATQRGT (674 aa)). A glycan (N-linked (GlcNAc...) asparagine) is linked at Asn45. Low complexity-rich tracts occupy residues 46 to 58 (TTTPASEASSSTS) and 69 to 80 (SSFSSSASSSSA). Disordered regions lie at residues 46–90 (TTTP…RQPT) and 105–220 (TDST…ATSN). The segment at 46-475 (TTTPASEASS…SVAPTSATSS (430 aa)) is serine/threonine rich region (STR). Polar residues-rich tracts occupy residues 81 to 90 (QELTASRQPT) and 109 to 126 (PFSQRPATSGAGRSSATG). Low complexity-rich tracts occupy residues 128 to 143 (VTPIIVPSSASPPSTA) and 150 to 169 (SALTTSQNSTSAATSESVTS). Asn157 carries an N-linked (GlcNAc...) asparagine glycan. The segment covering 170–188 (PGSTSGPAGTPESSSASDF) has biased composition (polar residues). Low complexity predominate over residues 189–202 (TSAVATSRASTATS). 4 N-linked (GlcNAc...) asparagine glycosylation sites follow: Asn298, Asn308, Asn357, and Asn393. Over residues 345–394 (VQTLPPVSTPTANGTVTSPPVDSQTTVLPTTTPGLSSDTIVTSPGVTANS) the composition is skewed to polar residues. Positions 345-516 (VQTLPPVSTP…APTVLPSDLP (172 aa)) are disordered. 2 stretches are compositionally biased toward low complexity: residues 395-407 (TQVPTTVPTTIPT) and 427-476 (NNTV…TSSA). 2 N-linked (GlcNAc...) asparagine glycosylation sites follow: Asn427 and Asn433. Residues 482-641 (WLPTTIIVQA…NGMLAHNLTM (160 aa)) form an HKR11-MSB2 homology domain (HMH) region. Positions 493-508 (LPSTTGSSTNAPSSAP) are enriched in polar residues. N-linked (GlcNAc...) asparagine glycosylation is found at Asn629, Asn638, Asn669, Asn683, and Asn686. Residues 658–689 (KPAGAGSGTGGNGSNGPNDVFNNDNNSTNQSA) are disordered. A compositionally biased stretch (gly residues) spans 660–671 (AGAGSGTGGNGS). Residues 672-686 (NGPNDVFNNDNNSTN) are compositionally biased toward low complexity. A helical membrane pass occupies residues 695-715 (VAGIAFGAVSLAAAYGAAMFI). The Cytoplasmic segment spans residues 716–804 (VARRYKKKRQ…VAQENSLGWN (89 aa)). Disordered regions lie at residues 724–748 (RQAHRRSSSVATPSEMRQSGSPALM) and 762–804 (GVMG…LGWN). Polar residues predominate over residues 731 to 744 (SSVATPSEMRQSGS). Positions 774–787 (GSNGSGRSAGNSAR) are enriched in low complexity.

The protein belongs to the HKR1/MSB2 family.

It is found in the cell membrane. The protein resides in the vacuole membrane. In terms of biological role, MSB2 and SHO1 have overlapping functions in recognizing various surface signals for MAPK PMK1 activation and appressorium formation. While MSB2 is critical for sensing surface hydrophobicity and cutin monomers, SHO1 may play a more important role in recognizing rice leaf waxes. This is Cell surface sensor MSB2 from Pyricularia oryzae (strain 70-15 / ATCC MYA-4617 / FGSC 8958) (Rice blast fungus).